Consider the following 143-residue polypeptide: Hemoglobin subunit alpha-1 (143 aa).

Position 2 is an N-acetylserine (S2). The Globin domain maps to 2 to 143 (SLSSKDKATV…RALALAEKYR (142 aa)). H60 is a binding site for O2. H89 serves as a coordination point for heme b.

The protein belongs to the globin family. In terms of assembly, hb 1 is a heterotetramer of two alpha-1 and two beta-1 chains. Hb 3 is a heterotetramer of two alpha-1 and two beta-2 chains. As to expression, red blood cells.

Functionally, involved in oxygen transport from gills to the various peripheral tissues. In Gadus morhua (Atlantic cod), this protein is Hemoglobin subunit alpha-1 (hba1).